The primary structure comprises 248 residues: Cyclo(L-leucyl-L-leucyl) synthase (248 aa).

The active-site Nucleophile is the serine 37. Substrate-binding positions include asparagine 40, 180–184 (YVIAE), tyrosine 204, and 209–210 (KL).

This sequence belongs to the CDPS family. In terms of assembly, monomer.

The enzyme catalyses 2 L-leucyl-tRNA(Leu) = cyclo(L-leucyl-L-leucyl) + 2 tRNA(Leu) + 2 H(+). Involved in the biosynthesis of pulcherrimin, a red extracellular pigment. It uses activated amino acids in the form of aminoacyl-tRNAs (aa-tRNAs) as substrates to catalyze the ATP-independent formation of cyclodipeptides which are intermediates in diketopiperazine (DKP) biosynthetic pathways. Catalyzes the formation of cyclo(L-Leu-L-Leu) (cLL) from L-leucyl-tRNA(Leu). Can also incorporate various nonpolar residues, such as L-phenylalanine, L-leucine and methionine, into cyclodipeptides. In Bacillus subtilis (strain 168), this protein is Cyclo(L-leucyl-L-leucyl) synthase (yvmC).